A 272-amino-acid chain; its full sequence is tRNA pseudouridine synthase A (272 aa).

The active-site Nucleophile is D51. Y109 provides a ligand contact to substrate.

It belongs to the tRNA pseudouridine synthase TruA family. In terms of assembly, homodimer.

The catalysed reaction is uridine(38/39/40) in tRNA = pseudouridine(38/39/40) in tRNA. Functionally, formation of pseudouridine at positions 38, 39 and 40 in the anticodon stem and loop of transfer RNAs. The protein is tRNA pseudouridine synthase A of Verminephrobacter eiseniae (strain EF01-2).